Reading from the N-terminus, the 321-residue chain is Bifunctional ligase/repressor BirA (321 aa).

Positions 22–41 (GEQLGETLGMSRAAINKHIQ) form a DNA-binding region, H-T-H motif. Positions 67 to 254 (LNAKQILGQL…ELRAALELFE (188 aa)) constitute a BPL/LPL catalytic domain. Biotin is bound by residues 89-91 (STN), glutamine 112, 116-118 (RGR), and lysine 183.

The protein belongs to the biotin--protein ligase family. Monomer in solution. Interacts with BCCP. Homodimerizes to bind DNA. Interaction with the corepressor bio-5'-AMP increases dimerization.

The catalysed reaction is biotin + L-lysyl-[protein] + ATP = N(6)-biotinyl-L-lysyl-[protein] + AMP + diphosphate + H(+). Its activity is regulated as follows. The switch between the enzymatic activity and the repressor activity is regulated by cellular demand for biotin. The switch occurs by swapping of protein interaction partners by holoBirA. In conditions of high biotin demand, holoBirA associates with apoBCCP to transfer biotin. In conditions of low biotin demand, holoBirA dimerizes, binds DNA and represses transcription of the biotin operon. Its function is as follows. Acts both as a biotin--[acetyl-CoA-carboxylase] ligase and a biotin-operon repressor. In the presence of ATP, BirA activates biotin to form the BirA-biotinyl-5'-adenylate (BirA-bio-5'-AMP or holoBirA) complex. HoloBirA can either transfer the biotinyl moiety to the biotin carboxyl carrier protein (BCCP) subunit of acetyl-CoA carboxylase, or bind to the biotin operator site and inhibit transcription of the operon. This is Bifunctional ligase/repressor BirA from Escherichia coli (strain K12).